Consider the following 518-residue polypeptide: Cytochrome P450 monooxygenase atnE (518 aa).

The helical transmembrane segment at 11-31 (FLAAFAVWMGVVVLAFAIFCV) threads the bilayer. Asn-184 is a glycosylation site (N-linked (GlcNAc...) asparagine). Position 458 (Cys-458) interacts with heme.

The protein belongs to the cytochrome P450 family. Heme serves as cofactor.

It localises to the membrane. It participates in secondary metabolite biosynthesis. Cytochrome P450 monooxygenase; part of the gene cluster that mediates the biosynthesis of aspercryptins, linear lipopeptides built from six amino acids including 2 highly unusual and nonproteogenic amino acids, 2-amino-octanoic acid (2aoa) and 2-amino-dodecanol (2adol). The core structure of aspercryptins is as follows: Ser/Ala-Thr-Ile/Val-2aoa-Asn-2adol. The first step of aspercryptin biosynthesis is the generation of the fatty acid precursors, octanoic and dodecanoic acids, by the FAS subunits atnF and atnM. The fatty acid precursors are likely transformed into the corresponding alpha-amino fatty acids in three steps. First, they are hydroxylated by the cytochrome P450 monooxygenase atnE, then oxidized to the corresponding alpha-keto acids by the NAD(P)-dependent oxidoreductase atnD, and finally converted to the alpha-amino fatty acids by the PLP-dependent aminotransferases atnH or atnJ. the alpha-amino fatty acids, 2-amino-octanoic and 2-amino-dodecanoic acids, are recognized, activated, and covalently tethered to the NRPS atnA by its fourth and sixth adenylation domains. The second module of atnA is the Thr module and contains an epimerase (E) domain responsible for the epimerization of Thr to D-allo-Thr. Additionally, despite atnA having only one epimerase domain, the first amino acid of aspercryptin A1 is D-Ser, suggesting that serine is either loaded directly as D-Ser on the first module or that the epimerase domain in the threonine module epimerizes both L-Ser and L-Thr. After condensation of the hexapeptide of aspercryptin, the C-terminal reductase (TE) domain might be involved in the reductive release and production of the aldehyde hexapeptide. Further reduction would generate aspercryptins. The variety of aspercryptins produced reflects the flexibility of the atnA NRPS, allowing incorporation of alanine instead of serine, valine for isoleucine, and a C10 fatty amino alcohol instead of the C12 version. AtnB seems to be involved in the selectivity for Ile versus Val by the third module. Moreover, type B, C and D aspercryptins have an additional N-terminal cichorine, acetyl and propionyl group respectively. This Emericella nidulans (strain FGSC A4 / ATCC 38163 / CBS 112.46 / NRRL 194 / M139) (Aspergillus nidulans) protein is Cytochrome P450 monooxygenase atnE.